Here is a 138-residue protein sequence, read N- to C-terminus: Ribosomal RNA large subunit methyltransferase H (138 aa).

S-adenosyl-L-methionine-binding positions include L57, G86, and 105-110; that span reads LSPLTF.

Belongs to the RNA methyltransferase RlmH family. Homodimer.

The protein localises to the cytoplasm. It carries out the reaction pseudouridine(1915) in 23S rRNA + S-adenosyl-L-methionine = N(3)-methylpseudouridine(1915) in 23S rRNA + S-adenosyl-L-homocysteine + H(+). Its function is as follows. Specifically methylates the pseudouridine at position 1915 (m3Psi1915) in 23S rRNA. In Prochlorococcus marinus (strain MIT 9301), this protein is Ribosomal RNA large subunit methyltransferase H.